A 41-amino-acid chain; its full sequence is MTTNTQYIYPIFTVRWLAVHALAVPTVFFLGSISAMQFIQR.

A helical membrane pass occupies residues 16–32; the sequence is WLAVHALAVPTVFFLGS. H20 contributes to the heme binding site.

The protein belongs to the PsbE/PsbF family. Heterodimer of an alpha subunit and a beta subunit. PSII is composed of 1 copy each of membrane proteins PsbA, PsbB, PsbC, PsbD, PsbE, PsbF, PsbH, PsbI, PsbJ, PsbK, PsbL, PsbM, PsbT, PsbX, PsbY, PsbZ, Psb30/Ycf12, at least 3 peripheral proteins of the oxygen-evolving complex and a large number of cofactors. It forms dimeric complexes. It depends on heme b as a cofactor.

The protein localises to the plastid. It is found in the chloroplast thylakoid membrane. Functionally, this b-type cytochrome is tightly associated with the reaction center of photosystem II (PSII). PSII is a light-driven water:plastoquinone oxidoreductase that uses light energy to abstract electrons from H(2)O, generating O(2) and a proton gradient subsequently used for ATP formation. It consists of a core antenna complex that captures photons, and an electron transfer chain that converts photonic excitation into a charge separation. The chain is Cytochrome b559 subunit beta from Nephroselmis olivacea (Green alga).